The primary structure comprises 451 residues: Phosphoglucosamine mutase (451 aa).

The active-site Phosphoserine intermediate is serine 107. Positions 107, 246, 248, and 250 each coordinate Mg(2+). Phosphoserine is present on serine 107.

The protein belongs to the phosphohexose mutase family. The cofactor is Mg(2+). Activated by phosphorylation.

It catalyses the reaction alpha-D-glucosamine 1-phosphate = D-glucosamine 6-phosphate. Its function is as follows. Catalyzes the conversion of glucosamine-6-phosphate to glucosamine-1-phosphate. In Azoarcus sp. (strain BH72), this protein is Phosphoglucosamine mutase.